A 455-amino-acid polypeptide reads, in one-letter code: 3-isopropylmalate dehydratase large subunit (455 aa).

The [4Fe-4S] cluster site is built by Cys-337, Cys-397, and Cys-400.

This sequence belongs to the aconitase/IPM isomerase family. LeuC type 1 subfamily. Heterodimer of LeuC and LeuD. The cofactor is [4Fe-4S] cluster.

The enzyme catalyses (2R,3S)-3-isopropylmalate = (2S)-2-isopropylmalate. It participates in amino-acid biosynthesis; L-leucine biosynthesis; L-leucine from 3-methyl-2-oxobutanoate: step 2/4. Catalyzes the isomerization between 2-isopropylmalate and 3-isopropylmalate, via the formation of 2-isopropylmaleate. This Leuconostoc citreum (strain KM20) protein is 3-isopropylmalate dehydratase large subunit.